Reading from the N-terminus, the 230-residue chain is Gilatoxin (230 aa).

The Peptidase S1 domain occupies 1–230 (IIGGQECDET…ISFLFWIQSI (230 aa)). Cystine bridges form between Cys7–Cys146, Cys26–Cys42, Cys125–Cys193, Cys157–Cys172, and Cys183–Cys208. His41 functions as the Charge relay system in the catalytic mechanism. Residue Asn84 is glycosylated (N-linked (GlcNAc...) asparagine). Asp93 functions as the Charge relay system in the catalytic mechanism. The active-site Charge relay system is Ser187.

Belongs to the peptidase S1 family. Post-translationally, extensively glycosylated, contains approximately 8 mol of monosaccharide per mol of toxin. As to expression, expressed by the mandibular venom gland.

Its subcellular location is the secreted. In terms of biological role, has kallikrein-like activity, releases bradykinin from kininogen. Catalyzes the hydrolysis of various arginine ester substrates for trypsin and thrombin and degrades both angiotensin I and II by cleavage of the dipeptide Asp-Arg from the NH2-terminal end. Fibrinogen is also degraded but a fibrin clot is not produced. May have a potentiating effect on potent hemorrhagic toxins present in the venom. This Heloderma horridum horridum (Mexican beaded lizard) protein is Gilatoxin.